The chain runs to 409 residues: NADH-quinone oxidoreductase subunit D (409 aa).

Belongs to the complex I 49 kDa subunit family. As to quaternary structure, NDH-1 is composed of 14 different subunits. Subunits NuoB, C, D, E, F, and G constitute the peripheral sector of the complex.

It localises to the cell inner membrane. It catalyses the reaction a quinone + NADH + 5 H(+)(in) = a quinol + NAD(+) + 4 H(+)(out). Functionally, NDH-1 shuttles electrons from NADH, via FMN and iron-sulfur (Fe-S) centers, to quinones in the respiratory chain. The immediate electron acceptor for the enzyme in this species is believed to be ubiquinone. Couples the redox reaction to proton translocation (for every two electrons transferred, four hydrogen ions are translocated across the cytoplasmic membrane), and thus conserves the redox energy in a proton gradient. The chain is NADH-quinone oxidoreductase subunit D (nuoD) from Thermus thermophilus (strain ATCC BAA-163 / DSM 7039 / HB27).